A 1043-amino-acid chain; its full sequence is Beta-klotho (1043 aa).

At 1 to 994 the chain is on the extracellular side; the sequence is MKTGCAAGSP…ICSFLVEKKP (994 aa). Glycosyl hydrolase-1 regions lie at residues 77 to 506 and 515 to 965; these read LYDT…DNGF and MKGR…SSGL. N-linked (GlcNAc...) asparagine glycans are attached at residues Asn84, Asn122, Asn161, Asn211, Asn262, Asn308, Asn389, Asn552, Asn609, Asn700, Asn704, and Asn837. A helical transmembrane segment spans residues 995–1015; the sequence is LIFFGCCFISTLAVLLSITVF. Residues 1016–1043 lie on the Cytoplasmic side of the membrane; it reads HHQKRRKFQKARNLQNIPLKKGHSRVFS.

This sequence belongs to the glycosyl hydrolase 1 family. Klotho subfamily. In terms of assembly, interacts with FGF19; this interaction is direct. Interacts (via C-terminus) with FGF21; this interaction is direct. Interacts with FGFR1 and FGFR4. As to expression, present in liver, muscle and white adipose tissue, but not in kidney (at protein level). Expressed in liver and pancreas, and at lower levels in skin, stomach, skeletal muscle, small intestine and lung.

Its subcellular location is the cell membrane. Functionally, contributes to the transcriptional repression of cholesterol 7-alpha-hydroxylase (CYP7A1), the rate-limiting enzyme in bile acid synthesis. Probably inactive as a glycosidase. Increases the ability of FGFR1 and FGFR4 to bind FGF21. This Mus musculus (Mouse) protein is Beta-klotho (Klb).